The chain runs to 266 residues: Ribosomal RNA small subunit methyltransferase A (266 aa).

Residues N10, I12, G37, E58, D82, and N105 each contribute to the S-adenosyl-L-methionine site.

The protein belongs to the class I-like SAM-binding methyltransferase superfamily. rRNA adenine N(6)-methyltransferase family. RsmA subfamily.

The protein localises to the cytoplasm. The catalysed reaction is adenosine(1518)/adenosine(1519) in 16S rRNA + 4 S-adenosyl-L-methionine = N(6)-dimethyladenosine(1518)/N(6)-dimethyladenosine(1519) in 16S rRNA + 4 S-adenosyl-L-homocysteine + 4 H(+). In terms of biological role, specifically dimethylates two adjacent adenosines (A1518 and A1519) in the loop of a conserved hairpin near the 3'-end of 16S rRNA in the 30S particle. May play a critical role in biogenesis of 30S subunits. This chain is Ribosomal RNA small subunit methyltransferase A, found in Mycoplasma capricolum subsp. capricolum (strain California kid / ATCC 27343 / NCTC 10154).